A 105-amino-acid chain; its full sequence is uncharacterized protein (105 aa).

Residues 41–62 form a helical membrane-spanning segment; the sequence is GIITKIAASPFVIVLYFNTAFF.

The protein resides in the membrane. This is an uncharacterized protein from Saccharomyces cerevisiae (strain ATCC 204508 / S288c) (Baker's yeast).